A 358-amino-acid polypeptide reads, in one-letter code: UDP-N-acetylglucosamine--N-acetylmuramyl-(pentapeptide) pyrophosphoryl-undecaprenol N-acetylglucosamine transferase (358 aa).

UDP-N-acetyl-alpha-D-glucosamine contacts are provided by residues 13–15 (TGG), Asn-125, Arg-161, Ser-189, Ile-244, and Gln-288.

The protein belongs to the glycosyltransferase 28 family. MurG subfamily.

Its subcellular location is the cell membrane. The catalysed reaction is di-trans,octa-cis-undecaprenyl diphospho-N-acetyl-alpha-D-muramoyl-L-alanyl-D-glutamyl-meso-2,6-diaminopimeloyl-D-alanyl-D-alanine + UDP-N-acetyl-alpha-D-glucosamine = di-trans,octa-cis-undecaprenyl diphospho-[N-acetyl-alpha-D-glucosaminyl-(1-&gt;4)]-N-acetyl-alpha-D-muramoyl-L-alanyl-D-glutamyl-meso-2,6-diaminopimeloyl-D-alanyl-D-alanine + UDP + H(+). The protein operates within cell wall biogenesis; peptidoglycan biosynthesis. Its function is as follows. Cell wall formation. Catalyzes the transfer of a GlcNAc subunit on undecaprenyl-pyrophosphoryl-MurNAc-pentapeptide (lipid intermediate I) to form undecaprenyl-pyrophosphoryl-MurNAc-(pentapeptide)GlcNAc (lipid intermediate II). This is UDP-N-acetylglucosamine--N-acetylmuramyl-(pentapeptide) pyrophosphoryl-undecaprenol N-acetylglucosamine transferase from Baumannia cicadellinicola subsp. Homalodisca coagulata.